We begin with the raw amino-acid sequence, 333 residues long: DNA-directed RNA polymerase subunit alpha (333 aa).

Positions 1 to 234 (MQISVNEFLT…QQLAAFVDLK (234 aa)) are alpha N-terminal domain (alpha-NTD). The interval 248 to 333 (IDPILLRPVD…SLKKDDKATA (86 aa)) is alpha C-terminal domain (alpha-CTD).

Belongs to the RNA polymerase alpha chain family. Homodimer. The RNAP catalytic core consists of 2 alpha, 1 beta, 1 beta' and 1 omega subunit. When a sigma factor is associated with the core the holoenzyme is formed, which can initiate transcription.

It carries out the reaction RNA(n) + a ribonucleoside 5'-triphosphate = RNA(n+1) + diphosphate. DNA-dependent RNA polymerase catalyzes the transcription of DNA into RNA using the four ribonucleoside triphosphates as substrates. The protein is DNA-directed RNA polymerase subunit alpha of Pseudomonas fluorescens (strain Pf0-1).